Consider the following 117-residue polypeptide: MEFKGILILLIISGTLSILILGASYILGYKQPDMEKVSVYECGFDPFDNPGNPFSVRFFLIGILFLIFDLEISFLFPWAVTYMGLPLFGYWVVMLFLFILTLGLIYEWIEGGLEWEN.

3 helical membrane-spanning segments follow: residues 6 to 26 (ILIL…ASYI), 58 to 78 (FFLI…LFPW), and 85 to 105 (LPLF…LGLI).

The protein belongs to the complex I subunit 3 family.

Its subcellular location is the mitochondrion membrane. The catalysed reaction is a ubiquinone + NADH + 5 H(+)(in) = a ubiquinol + NAD(+) + 4 H(+)(out). Functionally, core subunit of the mitochondrial membrane respiratory chain NADH dehydrogenase (Complex I) that is believed to belong to the minimal assembly required for catalysis. Complex I functions in the transfer of electrons from NADH to the respiratory chain. The immediate electron acceptor for the enzyme is believed to be ubiquinone. The polypeptide is NADH-ubiquinone oxidoreductase chain 3 (ND3) (Sarcophyton glaucum (Toadstool umbrella leather coral)).